A 351-amino-acid polypeptide reads, in one-letter code: Phosphoribosylformylglycinamidine cyclo-ligase (351 aa).

This sequence belongs to the AIR synthase family.

Its subcellular location is the cytoplasm. It carries out the reaction 2-formamido-N(1)-(5-O-phospho-beta-D-ribosyl)acetamidine + ATP = 5-amino-1-(5-phospho-beta-D-ribosyl)imidazole + ADP + phosphate + H(+). Its pathway is purine metabolism; IMP biosynthesis via de novo pathway; 5-amino-1-(5-phospho-D-ribosyl)imidazole from N(2)-formyl-N(1)-(5-phospho-D-ribosyl)glycinamide: step 2/2. The chain is Phosphoribosylformylglycinamidine cyclo-ligase from Burkholderia cenocepacia (strain ATCC BAA-245 / DSM 16553 / LMG 16656 / NCTC 13227 / J2315 / CF5610) (Burkholderia cepacia (strain J2315)).